The sequence spans 152 residues: ATP synthase epsilon chain 2 (152 aa).

It belongs to the ATPase epsilon chain family. As to quaternary structure, F-type ATPases have 2 components, CF(1) - the catalytic core - and CF(0) - the membrane proton channel. CF(1) has five subunits: alpha(3), beta(3), gamma(1), delta(1), epsilon(1). CF(0) has three main subunits: a, b and c.

The protein resides in the cell inner membrane. Functionally, produces ATP from ADP in the presence of a proton gradient across the membrane. The chain is ATP synthase epsilon chain 2 from Burkholderia orbicola (strain AU 1054).